Reading from the N-terminus, the 935-residue chain is Isoleucine--tRNA ligase (935 aa).

The 'HIGH' region motif lies at 58–68 (PYANGSIHVGH). Residue Glu558 coordinates L-isoleucyl-5'-AMP. The 'KMSKS' region motif lies at 599–603 (KMSKS). Lys602 is a binding site for ATP. Residues Cys897, Cys900, Cys917, and Cys920 each coordinate Zn(2+).

The protein belongs to the class-I aminoacyl-tRNA synthetase family. IleS type 1 subfamily. As to quaternary structure, monomer. The cofactor is Zn(2+).

The protein localises to the cytoplasm. It carries out the reaction tRNA(Ile) + L-isoleucine + ATP = L-isoleucyl-tRNA(Ile) + AMP + diphosphate. Functionally, catalyzes the attachment of isoleucine to tRNA(Ile). As IleRS can inadvertently accommodate and process structurally similar amino acids such as valine, to avoid such errors it has two additional distinct tRNA(Ile)-dependent editing activities. One activity is designated as 'pretransfer' editing and involves the hydrolysis of activated Val-AMP. The other activity is designated 'posttransfer' editing and involves deacylation of mischarged Val-tRNA(Ile). The chain is Isoleucine--tRNA ligase from Francisella tularensis subsp. novicida (strain U112).